A 279-amino-acid chain; its full sequence is Acetylglutamate kinase (279 aa).

Residues Gly64–Gly65, Arg86, and Asn177 contribute to the substrate site.

This sequence belongs to the acetylglutamate kinase family. ArgB subfamily.

Its subcellular location is the cytoplasm. The enzyme catalyses N-acetyl-L-glutamate + ATP = N-acetyl-L-glutamyl 5-phosphate + ADP. The protein operates within amino-acid biosynthesis; L-arginine biosynthesis; N(2)-acetyl-L-ornithine from L-glutamate: step 2/4. In terms of biological role, catalyzes the ATP-dependent phosphorylation of N-acetyl-L-glutamate. The sequence is that of Acetylglutamate kinase from Campylobacter jejuni subsp. jejuni serotype O:23/36 (strain 81-176).